An 838-amino-acid polypeptide reads, in one-letter code: Periplasmic nitrate reductase (838 aa).

The tat-type signal signal peptide spans 1 to 29; sequence MDMSRRTLLKAQAAAAAAAVAGIDLPAEA. In terms of domain architecture, 4Fe-4S Mo/W bis-MGD-type spans 40–96; that stretch reads LKWSKAPCRFCGTGCGVMVGVKDGRVVATHGDMQAEVNRGLNCVKGYFLSKIMYGAD. The [4Fe-4S] cluster site is built by Cys47, Cys50, Cys54, and Cys82. Mo-bis(molybdopterin guanine dinucleotide) is bound by residues Lys84, Gln151, Asn176, Cys180, 213–220, 244–248, 263–265, Met374, Gln378, Asn484, 510–511, Lys533, Asp560, and 720–729; these read WGSNMAEM, STYEH, GTD, SD, and TGRVLEHWHS. Phe796 contacts substrate. 2 residues coordinate Mo-bis(molybdopterin guanine dinucleotide): Asn804 and Lys821.

Belongs to the prokaryotic molybdopterin-containing oxidoreductase family. NasA/NapA/NarB subfamily. As to quaternary structure, component of the periplasmic nitrate reductase NapAB complex composed of NapA and NapB. It depends on [4Fe-4S] cluster as a cofactor. The cofactor is Mo-bis(molybdopterin guanine dinucleotide). Predicted to be exported by the Tat system. The position of the signal peptide cleavage has not been experimentally proven.

It is found in the periplasm. The catalysed reaction is 2 Fe(II)-[cytochrome] + nitrate + 2 H(+) = 2 Fe(III)-[cytochrome] + nitrite + H2O. Catalytic subunit of the periplasmic nitrate reductase complex NapAB. Receives electrons from NapB and catalyzes the reduction of nitrate to nitrite. In Methylobacterium sp. (strain 4-46), this protein is Periplasmic nitrate reductase.